The sequence spans 364 residues: Aminomethyltransferase (364 aa).

Belongs to the GcvT family. The glycine cleavage system is composed of four proteins: P, T, L and H.

It catalyses the reaction N(6)-[(R)-S(8)-aminomethyldihydrolipoyl]-L-lysyl-[protein] + (6S)-5,6,7,8-tetrahydrofolate = N(6)-[(R)-dihydrolipoyl]-L-lysyl-[protein] + (6R)-5,10-methylene-5,6,7,8-tetrahydrofolate + NH4(+). Functionally, the glycine cleavage system catalyzes the degradation of glycine. The polypeptide is Aminomethyltransferase (Salmonella dublin (strain CT_02021853)).